We begin with the raw amino-acid sequence, 461 residues long: Ig heavy chain C region, membrane-bound form (461 aa).

The interval 1-99 (ATPSPPTLYG…GESVWIKEIP (99 aa)) is CH1. A CH2 region spans residues 100 to 205 (DCKGDKVHPT…TQSRNITGSQ (106 aa)). 8 N-linked (GlcNAc...) asparagine glycosylation sites follow: Asn-164, Asn-200, Asn-245, Asn-275, Asn-374, Asn-411, Asn-415, and Asn-437. Residues 206 to 308 (VPCSCNDPVI…PLRASIHKEE (103 aa)) are CH3. The tract at residues 309–418 (VKDLREPSVS…IINRTVNKSS (110 aa)) is CH4. The helical transmembrane segment at 438-458 (ASTFIILFFLSIFYRAAVTLV) threads the bilayer.

The protein resides in the cell membrane. This chain is Ig heavy chain C region, membrane-bound form, found in Heterodontus francisci (Horn shark).